We begin with the raw amino-acid sequence, 480 residues long: Argininosuccinate lyase (480 aa).

Belongs to the lyase 1 family. Argininosuccinate lyase subfamily.

The protein localises to the cytoplasm. The catalysed reaction is 2-(N(omega)-L-arginino)succinate = fumarate + L-arginine. It participates in amino-acid biosynthesis; L-arginine biosynthesis; L-arginine from L-ornithine and carbamoyl phosphate: step 3/3. In Ruthia magnifica subsp. Calyptogena magnifica, this protein is Argininosuccinate lyase.